Here is a 298-residue protein sequence, read N- to C-terminus: Anamorsin homolog (298 aa).

An N-terminal SAM-like domain region spans residues 1–143 (MTQLIITYQS…IKAEKPSWKP (143 aa)). The tract at residues 143 to 162 (PEEGKVLVDDIDLEGSVPDI) is linker. Positions 175, 182, 185, and 187 each coordinate [2Fe-2S] cluster. A fe-S binding site A region spans residues 175-187 (CKSKERACNNCNC). 4 residues coordinate [4Fe-4S] cluster: cysteine 218, cysteine 221, cysteine 229, and cysteine 232. 2 short sequence motifs (cx2C motif) span residues 218 to 221 (CGNC) and 229 to 232 (CSGC). The tract at residues 218–232 (CGNCYLGDAFRCSGC) is fe-S binding site B.

It belongs to the anamorsin family. Monomer. It depends on [2Fe-2S] cluster as a cofactor. Requires [4Fe-4S] cluster as cofactor.

It localises to the cytoplasm. The protein localises to the mitochondrion intermembrane space. In terms of biological role, component of the cytosolic iron-sulfur (Fe-S) protein assembly (CIA) machinery. Required for the maturation of extramitochondrial Fe-S proteins. Part of an electron transfer chain functioning in an early step of cytosolic Fe-S biogenesis, facilitating the de novo assembly of a [4Fe-4S] cluster on the cytosolic Fe-S scaffold complex. Electrons are transferred from NADPH via a FAD- and FMN-containing diflavin oxidoreductase. Together with the diflavin oxidoreductase, also required for the assembly of the diferric tyrosyl radical cofactor of ribonucleotide reductase (RNR), probably by providing electrons for reduction during radical cofactor maturation in the catalytic small subunit. This chain is Anamorsin homolog, found in Cryptosporidium hominis.